A 492-amino-acid polypeptide reads, in one-letter code: MTLWINGDWVTGQGALRVKRNPVSGEVLWQGNDADAAQVGQACRAARAAFPRWARLSFGDRQVRVERFAGLLESNKAELTAIIARETGKPRWEAATEVTAMINKIAISIKAYHVRTGEQRSEMPDGAASLRHRPHGVLAVFGPYNFPGHLPNGHIVPALLAGNTIIFKPSELTPWSGEAVMRLWQQAGLPPGVLNLVQGGRATGQALSALEDLDGLLFTGSANTGYQLHRQLSGQPEKILALEMGGNNPLIIDEVADIDAAVHLTIQSAFVTAGQRCTCARRLFLKSGTQGDAFLARMVAVSQRLTPGTWDDEPQPFIGGLISEQAAQQVVTAWQELEAMGGRTLLAPRLLQAGTSLLTPGIIEMTGVTGVPDEEVFGPLLRVWRYDNFDEAIRMANNTRFGLSCGLVSPEREKFDQLLLGARAGIVNWNKPLTGAASTAPFGGIGASGNHRPSAWYAADYCAWPMASLESDSLTLPATLNPGLDFSDEVVR.

220 to 225 (GSANTG) provides a ligand contact to NAD(+). Catalysis depends on residues Glu243 and Cys277.

This sequence belongs to the aldehyde dehydrogenase family. AstD subfamily.

The catalysed reaction is N-succinyl-L-glutamate 5-semialdehyde + NAD(+) + H2O = N-succinyl-L-glutamate + NADH + 2 H(+). It participates in amino-acid degradation; L-arginine degradation via AST pathway; L-glutamate and succinate from L-arginine: step 4/5. In terms of biological role, catalyzes the NAD-dependent reduction of succinylglutamate semialdehyde into succinylglutamate. This chain is N-succinylglutamate 5-semialdehyde dehydrogenase, found in Escherichia coli O6:H1 (strain CFT073 / ATCC 700928 / UPEC).